The chain runs to 617 residues: AUGMIN subunit 3 (617 aa).

Coiled-coil stretches lie at residues 107–140 (DATL…SSAL), 314–334 (LHSL…LYQK), and 481–504 (AIIQ…ENSL).

It belongs to the HAUS3 family. Part of the augmin complex composed of 8 subunits. The complex acts on microtubules and interacts with gamma-tubulin in spindles and the phragmoplast. Interacts with AUG1.

It localises to the cytoplasm. It is found in the cytoskeleton. The protein resides in the spindle. The protein localises to the phragmoplast. Involved in microtubules reorganization during spindle and phragmoplast development. Required for gamma-tubulin localization during mitosis. The sequence is that of AUGMIN subunit 3 from Arabidopsis thaliana (Mouse-ear cress).